We begin with the raw amino-acid sequence, 131 residues long: Small ribosomal subunit protein uS9 (131 aa).

Belongs to the universal ribosomal protein uS9 family.

This is Small ribosomal subunit protein uS9 from Actinobacillus pleuropneumoniae serotype 7 (strain AP76).